The sequence spans 961 residues: Zinc finger protein basonuclin-1 (961 aa).

The segment at methionine 210 to phenylalanine 219 is hydrophobic. C2H2-type zinc fingers lie at residues valine 325 to histidine 348 and histidine 353 to histidine 382. The tract at residues arginine 370 to aspartate 393 is disordered. The Nuclear localization signal motif lies at proline 501–lysine 507. 2 positions are modified to phosphoserine: serine 505 and serine 509. Residues glutamate 523 to glycine 572 are disordered. Over residues serine 531 to aspartate 547 the composition is skewed to acidic residues. Basic and acidic residues predominate over residues serine 548 to histidine 560. 2 C2H2-type zinc fingers span residues phenylalanine 687–alanine 711 and histidine 715–glutamine 743. The segment at glutamate 810–glutamine 864 is disordered. The segment covering serine 826–aspartate 844 has biased composition (low complexity). 2 C2H2-type zinc fingers span residues isoleucine 895–histidine 918 and histidine 923–histidine 950. The tract at residues valine 937–glutamine 961 is disordered.

As to quaternary structure, interacts with HSF2BP (via C-terminus). In terms of processing, phosphorylation on Ser-505 and Ser-509 leads to cytoplasmic localization. In terms of tissue distribution, epidermis and germ cells of testis and ovary.

It is found in the nucleus. Its subcellular location is the cytoplasm. The protein resides in the nucleoplasm. Its function is as follows. Transcriptional activator. It is likely involved in the regulation of keratinocytes terminal differentiation in squamous epithelia and hair follicles. Required for the maintenance of spermatogenesis. It is involved in the positive regulation of oocyte maturation, probably acting through the control of BMP15 levels and regulation of AKT signaling cascade. May also play a role in the early development of embryos. The protein is Zinc finger protein basonuclin-1 (Bnc1) of Mus musculus (Mouse).